The following is a 645-amino-acid chain: MQNKRNQSRVLWLLLIYITIGIFIYVGVNSLIGTPDVSKIEYSELVQMLEDKKIVSLEIEDSGYARARDNRGLYYETYAPTLLSDQQYVYGLANQGIEIKYVRSLENSWWISILTFLLPVFLLIFLFTFLFRSSGGGANQGMNFIKSPAKKYDPKKTRTTFNDVAGVKEAKEELTDVVKFLKDPKVFNRLGARMPKGVLLVGEPGTGKTLLARAVAGEAGVPFFYISGSDFVELFVGVGAARVRDLFNQAKANAPAIIFIDEIDAVGRQRGSGLGGGHDEREQTLNSILVEMDGFDPSIGIIVMAATNRPDVLDKALLRPGRFDKKVVIDRPDAEGRKDILKIHFRGKKIAPDVDLEVLARATPGFVGADLENLVNEAALLAARNGEKFITMKDCEEAIERVIVGPERKTRVLSEQEKEVVAYHELGHAILGTILPNADPVHKVTIIPRGYAALGYTLQLPSEDRYLMNKSEILDDIAVMLAGRAAEEIIFDEITSGAENDLKRATEMARRMVESFGMSEKIGPVAWASESEETFLARELFREKNYSDETAKELDSEVKQIINKSYEKAKSVLLENKEKLQFIAQYLLKKETISGQELRDLLQKDTDDLKEYVENLGVSSTQEEAKVVNYEYLSRENNLIERKGI.

Topologically, residues 1–11 are cytoplasmic; the sequence is MQNKRNQSRVL. The chain crosses the membrane as a helical span at residues 12 to 32; it reads WLLLIYITIGIFIYVGVNSLI. The Periplasmic portion of the chain corresponds to 33–110; that stretch reads GTPDVSKIEY…YVRSLENSWW (78 aa). Residues 111-131 form a helical membrane-spanning segment; the sequence is ISILTFLLPVFLLIFLFTFLF. Residues 132–645 are Cytoplasmic-facing; it reads RSSGGGANQG…ENNLIERKGI (514 aa). 202-209 provides a ligand contact to ATP; the sequence is GEPGTGKT. A Zn(2+)-binding site is contributed by histidine 424. The active site involves glutamate 425. 2 residues coordinate Zn(2+): histidine 428 and aspartate 501.

This sequence in the central section; belongs to the AAA ATPase family. In the C-terminal section; belongs to the peptidase M41 family. Homohexamer. Requires Zn(2+) as cofactor.

The protein localises to the cell inner membrane. In terms of biological role, acts as a processive, ATP-dependent zinc metallopeptidase for both cytoplasmic and membrane proteins. Plays a role in the quality control of integral membrane proteins. The polypeptide is ATP-dependent zinc metalloprotease FtsH 3 (Petrotoga mobilis (strain DSM 10674 / SJ95)).